The following is a 94-amino-acid chain: MIKPLGDRVVIEIVETEEKTASGIVLPDTAKEKPQEGKVVAVGKGRVLDNGQRVAPEVEVGDRIIFSKYAGTEVKYDGKEYLILRESDILAVIG.

The protein belongs to the GroES chaperonin family. In terms of assembly, heptamer of 7 subunits arranged in a ring. Interacts with the chaperonin GroEL.

The protein localises to the cytoplasm. In terms of biological role, together with the chaperonin GroEL, plays an essential role in assisting protein folding. The GroEL-GroES system forms a nano-cage that allows encapsulation of the non-native substrate proteins and provides a physical environment optimized to promote and accelerate protein folding. GroES binds to the apical surface of the GroEL ring, thereby capping the opening of the GroEL channel. The protein is Co-chaperonin GroES of Parageobacillus thermoglucosidasius (Geobacillus thermoglucosidasius).